The sequence spans 275 residues: Phosphite import ATP-binding protein PxtA (275 aa).

The region spanning 11–252 (LRVDRLSVVY…QLERIYAGRS (242 aa)) is the ABC transporter domain. Position 44–51 (44–51 (GLSGAGKS)) interacts with ATP. Positions 251–275 (RSTTQPANAPAEPPVMLEPSLEMSR) are disordered.

It belongs to the ABC transporter superfamily. Phosphonates importer (TC 3.A.1.9.1) family. As to quaternary structure, the complex is composed of two ATP-binding proteins (PtxA), two transmembrane proteins (PtxC) and a solute-binding protein (PtxB).

Its subcellular location is the cell inner membrane. The enzyme catalyses phosphite(out) + ATP + H2O = phosphite(in) + ADP + phosphate + H(+). Part of the ABC transporter complex PtxABC involved in phosphite import. Responsible for energy coupling to the transport system. The polypeptide is Phosphite import ATP-binding protein PxtA (ptxA) (Stutzerimonas stutzeri (Pseudomonas stutzeri)).